A 54-amino-acid polypeptide reads, in one-letter code: Ovomucoid (54 aa).

The 51-residue stretch at V4 to C54 folds into the Kazal-like domain. 3 cysteine pairs are disulfide-bonded: C6/C36, C14/C33, and C22/C54. Residue N43 is glycosylated (N-linked (GlcNAc...) asparagine).

Its subcellular location is the secreted. The protein is Ovomucoid of Alectoris chukar (Chukar partridge).